The chain runs to 451 residues: UPF0210 protein NMCC_1554 (451 aa).

The protein belongs to the UPF0210 family. In terms of assembly, homodimer.

The sequence is that of UPF0210 protein NMCC_1554 from Neisseria meningitidis serogroup C (strain 053442).